Here is a 668-residue protein sequence, read N- to C-terminus: L-type lectin-domain containing receptor kinase I.7 (668 aa).

Residues 1–21 (MIRGLLLGIIWMIFCVCSSFQ) form the signal peptide. The Extracellular segment spans residues 22–285 (QETPFVYNNF…SSTKKKSTSP (264 aa)). The interval 24-256 (TPFVYNNFGH…YQYILGWSFS (233 aa)) is legume-lectin like. N-linked (GlcNAc...) asparagine glycans are attached at residues Asn-56, Asn-125, Asn-167, Asn-201, and Asn-223. Residues 286–306 (VLSVLLGLIAFIVLGILVVAY) traverse the membrane as a helical segment. Over 307–668 (LYRRNLYSEV…THSVLYGSGR (362 aa)) the chain is Cytoplasmic. The Protein kinase domain occupies 341–620 (FNRSEFLGRG…LNGNLALPEF (280 aa)). ATP contacts are provided by residues 347 to 355 (LGRGGFGEV) and Lys-372. The Proton acceptor role is filled by Asp-468.

It in the C-terminal section; belongs to the protein kinase superfamily. Ser/Thr protein kinase family. In the N-terminal section; belongs to the leguminous lectin family.

The protein localises to the cell membrane. It catalyses the reaction L-seryl-[protein] + ATP = O-phospho-L-seryl-[protein] + ADP + H(+). The catalysed reaction is L-threonyl-[protein] + ATP = O-phospho-L-threonyl-[protein] + ADP + H(+). Its function is as follows. Involved in resistance response to the pathogenic oomycetes Phytophthora infestans and Phytophthora capsici. This Arabidopsis thaliana (Mouse-ear cress) protein is L-type lectin-domain containing receptor kinase I.7.